A 214-amino-acid polypeptide reads, in one-letter code: Riboflavin kinase (214 aa).

Residues 1-27 (MRPDRPRDPVTGPDEGPESPYPIRMSG) are disordered. Mg(2+) contacts are provided by T44 and N46. E101 acts as the Nucleophile in catalysis.

Belongs to the flavokinase family. The cofactor is Zn(2+). It depends on Mg(2+) as a cofactor.

The enzyme catalyses riboflavin + ATP = FMN + ADP + H(+). It functions in the pathway cofactor biosynthesis; FMN biosynthesis; FMN from riboflavin (ATP route): step 1/1. In terms of biological role, catalyzes the phosphorylation of riboflavin (vitamin B2) to form flavin mononucleotide (FMN) coenzyme. This is Riboflavin kinase (fmn1) from Aspergillus niger (strain ATCC MYA-4892 / CBS 513.88 / FGSC A1513).